A 247-amino-acid chain; its full sequence is MNILSCSTNILNGFYDISGVEVGQHFYWKIGGFQVHGQVLITSWVVIAILLGSAALAVRKPQTIPTGIQNFFEYVLEFIRDVSKTQIGEEYGPWVPFIGTIFLFIFVSNWSGALLPWKIIQLPHGELAAPTNDINTTVALALLTSVAYFYAGLAKKGLGYFGKYIQPTPILLPINILEDFTKPLSLSFRLFGNILADELVVVVLVSLVPSVVPIPVMFLGLFTSGIQALIFATLAAAYIGESMEGHH.

5 helical membrane-spanning segments follow: residues 38–58 (QVLI…ALAV), 95–115 (VPFI…GALL), 134–154 (INTT…AGLA), 199–219 (LVVV…VMFL), and 220–240 (GLFT…AYIG).

Belongs to the ATPase A chain family. F-type ATPases have 2 components, CF(1) - the catalytic core - and CF(0) - the membrane proton channel. CF(1) has five subunits: alpha(3), beta(3), gamma(1), delta(1), epsilon(1). CF(0) has four main subunits: a, b, b' and c.

It is found in the plastid. The protein resides in the chloroplast thylakoid membrane. Functionally, key component of the proton channel; it plays a direct role in the translocation of protons across the membrane. The protein is ATP synthase subunit a, chloroplastic of Trachelium caeruleum (Blue throatwort).